Here is a 720-residue protein sequence, read N- to C-terminus: NAD(+) hydrolase ApTIR (720 aa).

Positions 1-131 (MRYDAFISYS…AVPPALRGVF (131 aa)) constitute a TIR domain. NAD(+)-binding positions include 10–11 (SH) and Ala-48. The active site involves Glu-84. Residues 192–211 (GALAVVCALLLLVAGTAVAW) traverse the membrane as a helical segment. Disordered regions lie at residues 231-275 (ATAA…AVAE) and 292-359 (EGIA…EEAV). 2 stretches are compositionally biased toward basic and acidic residues: residues 256–268 (EQQR…EEAR) and 307–359 (AEAR…EEAV). Positions 313-362 (RGVADAEKAKANRAAAEAERQRKIAADEQRKAHEAAAEAERQREEAVKQQ) form a coiled coil. WD repeat units lie at residues 420 to 459 (GHTA…APRR), 465 to 504 (SSTA…APRR), 510 to 549 (GHTD…APRR), 555 to 594 (DHTA…APRR), 600 to 639 (GHTA…APRR), 645 to 684 (GHTA…APRR), and 690 to 720 (GHTD…CCGM).

It localises to the cell membrane. The enzyme catalyses NAD(+) + H2O = ADP-D-ribose + nicotinamide + H(+). In terms of biological role, NAD(+) hydrolase (NADase) that catalyzes cleavage of NAD(+) into ADP-D-ribose (ADPR) and nicotinamide. The sequence is that of NAD(+) hydrolase ApTIR from Actinoplanes sp. (strain ATCC 31044 / CBS 674.73 / SE50/110).